The following is a 231-amino-acid chain: Protein OPG061 (231 aa).

Belongs to the orthopoxvirus OPG058 family.

The protein localises to the host nucleus. It is found in the host nucleolus. In Cynomys gunnisoni (Gunnison's prairie dog), this protein is Protein OPG061 (OPG061).